Consider the following 916-residue polypeptide: Bifunctional aspartokinase/homoserine dehydrogenase 2, chloroplastic (916 aa).

The transit peptide at 1–87 (MATLKPSFTV…VDQVQIPKGE (87 aa)) directs the protein to the chloroplast. The segment at 88–336 (MWSVHKFGGT…VNEAVILQTL (249 aa)) is aspartokinase. Residues 337–562 (SYQEAWEMSY…LSRTTLAMGI (226 aa)) form an interface region. 2 consecutive ACT domains span residues 412–487 (VEGT…VIPN) and 493–570 (AVGQ…LIGA). The homoserine dehydrogenase stretch occupies residues 563 to 916 (VGPGLIGATL…RLASYLGAPS (354 aa)). Position 568 (isoleucine 568) interacts with NAD(+). Positions 568, 600, 649, and 673 each coordinate NADP(+). Isoleucine 568 contacts NADPH. Threonine 649 is an NAD(+) binding site. NADPH is bound by residues threonine 649 and lysine 673. Positions 700, 703, 705, and 707 each coordinate Na(+). Residues glycine 758 and glutamate 761 each contribute to the NADP(+) site. 2 residues coordinate L-homoserine: glutamate 761 and aspartate 772. Lysine 776 serves as the catalytic Proton donor. Glycine 893 contacts NAD(+). NADP(+) is bound at residue glycine 893. Position 893 (glycine 893) interacts with NADPH.

It in the N-terminal section; belongs to the aspartokinase family. In the C-terminal section; belongs to the homoserine dehydrogenase family. In terms of assembly, homo- or heterodimer. A metal cation is required as a cofactor.

Its subcellular location is the plastid. The protein localises to the chloroplast. It catalyses the reaction L-homoserine + NADP(+) = L-aspartate 4-semialdehyde + NADPH + H(+). The catalysed reaction is L-homoserine + NAD(+) = L-aspartate 4-semialdehyde + NADH + H(+). It carries out the reaction L-aspartate + ATP = 4-phospho-L-aspartate + ADP. It functions in the pathway amino-acid biosynthesis; L-lysine biosynthesis via DAP pathway; (S)-tetrahydrodipicolinate from L-aspartate: step 1/4. It participates in amino-acid biosynthesis; L-methionine biosynthesis via de novo pathway; L-homoserine from L-aspartate: step 1/3. The protein operates within amino-acid biosynthesis; L-methionine biosynthesis via de novo pathway; L-homoserine from L-aspartate: step 3/3. Its pathway is amino-acid biosynthesis; L-threonine biosynthesis; L-threonine from L-aspartate: step 1/5. It functions in the pathway amino-acid biosynthesis; L-threonine biosynthesis; L-threonine from L-aspartate: step 3/5. With respect to regulation, threonine interaction with Gln-443 leads to inhibition of aspartate kinase activity and facilitates the binding of a second threonine on Gln-524, leading to a partial inhibition of homoserine dehydrogenase activity (25% of activity remaining at saturation with threonine). Homoserine dehydrogenase activity is also partially inhibited by cysteine (15% of activity remaining at saturation with cysteine). No synergy between threonine and cysteine for the inhibition. 13-fold activation of aspartate kinase activity by cysteine, isoleucine, valine, serine and alanine at 2.5 mM and 4-fold activation by leucine at 2.5 mM, but no activation of homoserine dehydrogenase activity. Its function is as follows. Bifunctional aspartate kinase and homoserine dehydrogenase that catalyzes the first and the third steps toward the synthesis of lysine, methionine and threonine from aspartate. The chain is Bifunctional aspartokinase/homoserine dehydrogenase 2, chloroplastic (AKHSDH2) from Arabidopsis thaliana (Mouse-ear cress).